Here is a 427-residue protein sequence, read N- to C-terminus: Lipophilic envelope-spanning tunnel protein A (427 aa).

At 1-75 (MALNTPQITP…LTRLAAMAFT (75 aa)) the chain is on the cytoplasmic side. The chain crosses the membrane as a helical span at residues 76–96 (MLLLMPFAWGEPLLHIWLLGI). Residues 97 to 120 (RIDANVMQGIWQMTKQGDAITGSM) lie on the Periplasmic side of the membrane. Residues 121–141 (VFFCVIGAPLILVTSIAYLWF) form a helical membrane-spanning segment. The Cytoplasmic segment spans residues 142-269 (GNRLGMNLRP…RHSLQKCWAA (128 aa)). The helical transmembrane segment at 270-290 (LLASIVLLLPANLLPISIIYL) threads the bilayer. The Periplasmic portion of the chain corresponds to 291–310 (NGGRQEDTILSGIMSLASSN). The chain crosses the membrane as a helical span at residues 311–331 (IAVAGIVFIASILVPFTKVIV). Residues 332–350 (MFTLLLSIHFKCQQGLRTR) are Cytoplasmic-facing. A helical transmembrane segment spans residues 351-371 (ILLLRMVTWIGRWSMLDLFVI). Over 372–382 (SLTMSLINRDQ) the chain is Periplasmic. Residues 383-403 (ILAFTMGPAAFYFGAAVILTI) traverse the membrane as a helical segment. At 404-427 (LAVEWLDSRLLWDAHESGNARFDD) the chain is on the cytoplasmic side.

The protein belongs to the PqiA family. In terms of assembly, may interact with LetB in the inner membrane.

It is found in the cell inner membrane. In terms of biological role, could be part, together with LetB, of a system that transports lipids between the inner membrane and the outer membrane. Contributes to membrane integrity. This is Lipophilic envelope-spanning tunnel protein A from Escherichia coli (strain K12).